The chain runs to 449 residues: UMP-CMP kinase 2, mitochondrial (449 aa).

The N-terminal 98 residues, 1–98 (MAFARRLLRG…VRAARLHQRL (98 aa)), are a transit peptide targeting the mitochondrion. ATP is bound at residue 259–266 (GLDATGKT). Residues 380–412 (EERLQRLQGRGMEKTREEAELEANSVFRQKVEM) are a coiled coil.

The protein belongs to the thymidylate kinase family. As to expression, high levels are observed in myeloid, lymphoid and mesenchymal tissues.

The protein localises to the mitochondrion. It catalyses the reaction CMP + ATP = CDP + ADP. It carries out the reaction dCMP + ATP = dCDP + ADP. The enzyme catalyses a 2'-deoxyribonucleoside 5'-diphosphate + ATP = a 2'-deoxyribonucleoside 5'-triphosphate + ADP. The catalysed reaction is a ribonucleoside 5'-diphosphate + ATP = a ribonucleoside 5'-triphosphate + ADP. Functionally, mitochondrial nucleotide monophosphate kinase needed for salvage dNTP synthesis that mediates immunomodulatory and antiviral activities through IFN-dependent and IFN-independent pathways. Restricts the replication of multiple viruses including flaviviruses or coronaviruses. Together with viperin/RSAD2 and ddhCTP, suppresses the replication of several coronaviruses through inhibition of the viral RNA-dependent RNA polymerase activities. Concerning flaviviruses, restricts RNA translation when localized to the mitochondria independently of its kinase activity. Is able to phosphorylate dUMP, dCMP, CMP, UMP and monophosphates of the pyrimidine nucleoside analogs ddC, dFdC, araC, BVDU and FdUrd with ATP as phosphate donor. Efficacy is highest for dUMP followed by dCMP while CMP and UMP are poor substrates. Controls therefore mitochondrial DNA synthesis by supplying required deoxyribonucleotides. CMPK2-dependent mitochondrial DNA synthesis is necessary for the production of oxidized mitochondrial DNA fragments after exposure to NLRP3 activators. In turn, cytosolic oxidized mtDNA associates with the NLRP3 inflammasome complex and is required for its activation. This is UMP-CMP kinase 2, mitochondrial (CMPK2) from Homo sapiens (Human).